A 409-amino-acid chain; its full sequence is Small ribosomal subunit protein mS47 (409 aa).

Residues 1–26 (MQTVKALRRVSEPLQWVRSVSYGRRF) constitute a mitochondrion transit peptide. A disordered region spans residues 388–409 (ASELDDSDSELKLPTAQREPYF).

This sequence belongs to the enoyl-CoA hydratase/isomerase family. Mitochondrion-specific ribosomal protein mS47 subfamily. Component of the mitochondrial ribosome small subunit.

The protein resides in the mitochondrion. The polypeptide is Small ribosomal subunit protein mS47 (Arabidopsis thaliana (Mouse-ear cress)).